The sequence spans 1034 residues: Protein argonaute 2 (1034 aa).

A disordered region spans residues 1-201 (MEHERGGGGR…PMRRPDGGGS (201 aa)). A compositionally biased stretch (gly residues) spans 18–125 (GGRGGGGGDG…ESGGGGGRGG (108 aa)). Positions 172 to 187 (VVRVQPPAPPVAVSRS) are enriched in low complexity. Positions 391 to 504 (PVLDLVQKSV…VPIELCDLLE (114 aa)) constitute a PAZ domain. The Piwi domain occupies 688-989 (LLFCPMSDQH…AAYRGRLYYE (302 aa)).

The protein belongs to the argonaute family. Ago subfamily.

Its function is as follows. Probably involved in the RNA silencing pathway. May bind to short RNAs such as microRNAs (miRNAs) or short interfering RNAs (siRNAs), and represses the translation of mRNAs which are complementary to them. This Oryza sativa subsp. japonica (Rice) protein is Protein argonaute 2 (AGO2).